The primary structure comprises 118 residues: Sporulation protein YjcA (118 aa).

A run of 3 helical transmembrane segments spans residues 8-28, 62-82, and 92-112; these read IVLL…DTIM, FIGE…GFLI, and AQWL…ETLV.

This sequence belongs to the UPF0713 family.

The protein resides in the cell membrane. Involved in sporulation. The sequence is that of Sporulation protein YjcA (yjcA) from Bacillus subtilis (strain 168).